The chain runs to 228 residues: GrpE protein homolog, mitochondrial (228 aa).

The segment covering 46-57 (DEAKSEESKENN) has biased composition (basic and acidic residues). The segment at 46 to 66 (DEAKSEESKENNEDLTEEQSE) is disordered.

It belongs to the GrpE family. In terms of assembly, component of the PAM complex, at least composed of SSC1 (mtHsp70), MGE1, TIM44, PAM16/TIM16, PAM17 and PAM18/TIM14. Interacts with SSQ1. In terms of processing, the N-terminus is blocked.

It is found in the mitochondrion matrix. Its function is as follows. Essential component of the PAM complex, a complex required for the translocation of transit peptide-containing proteins from the inner membrane into the mitochondrial matrix in an ATP-dependent manner. Seems to control the nucleotide-dependent binding of SSC1 to substrate proteins and the association of SSC1 with TIM44. In Saccharomyces cerevisiae (strain ATCC 204508 / S288c) (Baker's yeast), this protein is GrpE protein homolog, mitochondrial (MGE1).